A 93-amino-acid polypeptide reads, in one-letter code: Small ribosomal subunit protein bS16 (93 aa).

This sequence belongs to the bacterial ribosomal protein bS16 family.

The protein is Small ribosomal subunit protein bS16 of Dictyoglomus thermophilum (strain ATCC 35947 / DSM 3960 / H-6-12).